A 614-amino-acid chain; its full sequence is Sorting nexin-18 (614 aa).

The SH3 domain occupies 1–61 (MALRARALYD…PASYVQVIRA (61 aa)). The segment at 85–218 (GFEPLPAAPP…SQELGHGEPQ (134 aa)) is disordered. Positions 90–101 (PAAPPAAFPPLL) are enriched in pro residues. The span at 141–151 (SDDDWDDEWDD) shows a compositional bias: acidic residues. The region spanning 266 to 376 (FQCTIDDPTK…HFLTCPSSTD (111 aa)) is the PX domain. Positions 302, 304, and 342 each coordinate a 1,2-diacyl-sn-glycero-3-phospho-(1D-myo-inositol-4,5-bisphosphate). In terms of domain architecture, BAR spans 411–614 (LQEVESKIDG…EEALHKYDSV (204 aa)).

Belongs to the sorting nexin family. Heterodimer with SNX9. Interacts with ITCH. Interacts with dynamin-2 (DNM2), SYNJ1 and WASL. Interacts with the AP-1 complex. Interacts with FCHSD1 (via the F-BAR domain).

The protein resides in the endomembrane system. It is found in the endosome membrane. It localises to the recycling endosome membrane. Its subcellular location is the cell membrane. The protein localises to the cytoplasmic vesicle membrane. Functionally, involved in endocytosis and intracellular vesicle trafficking, both during interphase and at the end of mitosis. Required for efficient progress through mitosis and cytokinesis. Required for normal formation of the cleavage furrow at the end of mitosis. Plays a role in endocytosis via clathrin-coated pits, but also clathrin-independent, actin-dependent fluid-phase endocytosis. Plays a role in macropinocytosis. Binds to membranes enriched in phosphatidylinositol 4,5-bisphosphate and promotes membrane tubulation. Stimulates the GTPase activity of DNM2. Promotes DNM2 location at the plasma membrane. Together with DNM2, involved in autophagosome assembly by regulating trafficking from recycling endosomes of phospholipid scramblase ATG9A. The protein is Sorting nexin-18 of Mus musculus (Mouse).